Reading from the N-terminus, the 81-residue chain is U1-sicaritoxin-Li1c (81 aa).

Positions 1-16 (ARGDAEKWESLISEER) are excised as a propeptide. 4 disulfide bridges follow: C18/C35, C26/C40, C34/C53, and C42/C51. R62 bears the Arginine amide mark. The propeptide occupies 66–81 (ALMLDPETHRLLFSED).

The protein belongs to the neurotoxin 28 (Litx) family. Expressed by the venom gland.

Its subcellular location is the secreted. Functionally, toxin active against insects (S.frugiperda larvae). May act on sodium (Nav) or calcium (Cav) channels. The protein is U1-sicaritoxin-Li1c of Loxosceles intermedia (Brown spider).